The following is a 284-amino-acid chain: Urease accessory protein UreD (284 aa).

The tract at residues Met1–Arg28 is disordered.

Belongs to the UreD family. UreD, UreF and UreG form a complex that acts as a GTP-hydrolysis-dependent molecular chaperone, activating the urease apoprotein by helping to assemble the nickel containing metallocenter of UreC. The UreE protein probably delivers the nickel.

It localises to the cytoplasm. Required for maturation of urease via the functional incorporation of the urease nickel metallocenter. The polypeptide is Urease accessory protein UreD (Agrobacterium fabrum (strain C58 / ATCC 33970) (Agrobacterium tumefaciens (strain C58))).